A 203-amino-acid polypeptide reads, in one-letter code: Ribonuclease HII (203 aa).

In terms of domain architecture, RNase H type-2 spans 14 to 203 (GVIAGVDEVG…ILNSTKRALL (190 aa)). Positions 20, 21, and 112 each coordinate a divalent metal cation.

The protein belongs to the RNase HII family. The cofactor is Mn(2+). It depends on Mg(2+) as a cofactor.

The protein localises to the cytoplasm. It carries out the reaction Endonucleolytic cleavage to 5'-phosphomonoester.. Endonuclease that specifically degrades the RNA of RNA-DNA hybrids. The polypeptide is Ribonuclease HII (Wolbachia sp. subsp. Brugia malayi (strain TRS)).